We begin with the raw amino-acid sequence, 248 residues long: Probable transcriptional regulatory protein Plav_2114 (248 aa).

The protein belongs to the TACO1 family.

It is found in the cytoplasm. This Parvibaculum lavamentivorans (strain DS-1 / DSM 13023 / NCIMB 13966) protein is Probable transcriptional regulatory protein Plav_2114.